Here is a 49-residue protein sequence, read N- to C-terminus: Feruloyl esterase A (49 aa).

Belongs to the AB hydrolase superfamily. FaeA family.

The protein localises to the secreted. The enzyme catalyses feruloyl-polysaccharide + H2O = ferulate + polysaccharide.. Its function is as follows. Involved in degradation of plant cell walls. Hydrolyzes the feruloyl-arabinose ester bond in arabinoxylans as well as the feruloyl-galactose and feruloyl-arabinose ester bonds in pectin. Active against methyl esters of sinapate (MSA), but not caffeate (MCA). The polypeptide is Feruloyl esterase A (Talaromyces stipitatus (strain ATCC 10500 / CBS 375.48 / QM 6759 / NRRL 1006) (Penicillium stipitatum)).